Consider the following 425-residue polypeptide: Enolase (425 aa).

Gln-162 contributes to the (2R)-2-phosphoglycerate binding site. Glu-204 functions as the Proton donor in the catalytic mechanism. Mg(2+) contacts are provided by Asp-241, Glu-282, and Asp-309. 4 residues coordinate (2R)-2-phosphoglycerate: Lys-334, Arg-363, Ser-364, and Lys-385. Catalysis depends on Lys-334, which acts as the Proton acceptor.

The protein belongs to the enolase family. The cofactor is Mg(2+).

The protein resides in the cytoplasm. Its subcellular location is the secreted. It localises to the cell surface. The catalysed reaction is (2R)-2-phosphoglycerate = phosphoenolpyruvate + H2O. The protein operates within carbohydrate degradation; glycolysis; pyruvate from D-glyceraldehyde 3-phosphate: step 4/5. Catalyzes the reversible conversion of 2-phosphoglycerate (2-PG) into phosphoenolpyruvate (PEP). It is essential for the degradation of carbohydrates via glycolysis. The protein is Enolase of Corynebacterium aurimucosum (strain ATCC 700975 / DSM 44827 / CIP 107346 / CN-1) (Corynebacterium nigricans).